Consider the following 259-residue polypeptide: Thiazole synthase (259 aa).

Lysine 99 acts as the Schiff-base intermediate with DXP in catalysis. Residues glycine 161, 187 to 188 (AG), and 209 to 219 (NSAIACAQNPI) each bind 1-deoxy-D-xylulose 5-phosphate.

This sequence belongs to the ThiG family. Homotetramer. Forms heterodimers with either ThiH or ThiS.

Its subcellular location is the cytoplasm. The enzyme catalyses [ThiS sulfur-carrier protein]-C-terminal-Gly-aminoethanethioate + 2-iminoacetate + 1-deoxy-D-xylulose 5-phosphate = [ThiS sulfur-carrier protein]-C-terminal Gly-Gly + 2-[(2R,5Z)-2-carboxy-4-methylthiazol-5(2H)-ylidene]ethyl phosphate + 2 H2O + H(+). The protein operates within cofactor biosynthesis; thiamine diphosphate biosynthesis. Its function is as follows. Catalyzes the rearrangement of 1-deoxy-D-xylulose 5-phosphate (DXP) to produce the thiazole phosphate moiety of thiamine. Sulfur is provided by the thiocarboxylate moiety of the carrier protein ThiS. In vitro, sulfur can be provided by H(2)S. This Aliarcobacter butzleri (strain RM4018) (Arcobacter butzleri) protein is Thiazole synthase.